A 165-amino-acid chain; its full sequence is Transcription factor zip-10 (165 aa).

The span at 53 to 71 (ASLGTSTTSSSRCSSTESS) shows a compositional bias: low complexity. The tract at residues 53-99 (ASLGTSTTSSSRCSSTESSAAPGKIRRGRPQQEIADGQDAHSQKKRH) is disordered. Positions 104-150 (ARQYRAQMRQKVENVKSLHDEKEQLELEVKALRQAVSGLQQENAQKD) form a coiled coil.

Its subcellular location is the nucleus. Functionally, transcription factor that regulates the expression of genes in response to changes in temperature. In particular, binds to the promoter region of genes such as asp-17 in response to severe cold to warm temperature transitions to promote gene expression. Promotes stress-induced death, particularly in older animals, following cold shock followed by warming and this may have evolved as a form of kin survival under thermal stress conditions, favoring the survival of younger animals. This chain is Transcription factor zip-10, found in Caenorhabditis elegans.